The following is a 35-amino-acid chain: Photosystem I reaction center subunit Z (35 aa).

The helical transmembrane segment at 10 to 30 (LVIITTLVVPFMAAAALLFII) threads the bilayer.

In terms of assembly, the G.violaceus PSI reaction center is composed of one copy each of PsaA,B,C,D,E,F,L,M and Z, and forms trimeric complexes.

It is found in the cell inner membrane. The protein is Photosystem I reaction center subunit Z (psaZ) of Gloeobacter violaceus (strain ATCC 29082 / PCC 7421).